We begin with the raw amino-acid sequence, 94 residues long: uncharacterized protein (94 aa).

This is an uncharacterized protein from Saccharomyces cerevisiae (strain ATCC 204508 / S288c) (Baker's yeast).